We begin with the raw amino-acid sequence, 317 residues long: Glycine--tRNA ligase alpha subunit (317 aa).

It belongs to the class-II aminoacyl-tRNA synthetase family. As to quaternary structure, tetramer of two alpha and two beta subunits.

The protein resides in the cytoplasm. The enzyme catalyses tRNA(Gly) + glycine + ATP = glycyl-tRNA(Gly) + AMP + diphosphate. This is Glycine--tRNA ligase alpha subunit from Leptothrix cholodnii (strain ATCC 51168 / LMG 8142 / SP-6) (Leptothrix discophora (strain SP-6)).